The chain runs to 351 residues: MLKNDLFIRALKRQATPRTPIWVMRQAGRYLPEYRAVREKTDFLTLCKTPELACEVTIQPVDLMGVDAAIIFSDILVVNEAMGMNVEIIETKGIKLTPPIRSQADIDKLIDPDIDEKLGYVLDAIRLAKKELNDRVPLIGFSGAAWTLFTYAVEGGGSKNYTWAKKMMYREPKMAHQLLQKISDCISAYLVKQVEAGADAIQIFDSWASALSEDDYREFALPYIKQNVAAVKAAYPEIPVIAFAKDMNTILSDIADCGADAVGLGWNIDIAKARKELNDRVCLQGNMDPTVLYGTPEKIKSEAAKVLKQFGQHNDHSGHVFNLGHGILPDVDPANLKCLVEFVKEESAKYH.

Residues 25–29 (RQAGR), Phe43, Asp74, Tyr151, Ser206, and His325 contribute to the substrate site.

This sequence belongs to the uroporphyrinogen decarboxylase family. Homodimer.

It localises to the cytoplasm. The catalysed reaction is uroporphyrinogen III + 4 H(+) = coproporphyrinogen III + 4 CO2. Its pathway is porphyrin-containing compound metabolism; protoporphyrin-IX biosynthesis; coproporphyrinogen-III from 5-aminolevulinate: step 4/4. Its function is as follows. Catalyzes the decarboxylation of four acetate groups of uroporphyrinogen-III to yield coproporphyrinogen-III. The chain is Uroporphyrinogen decarboxylase from Chlorobaculum tepidum (strain ATCC 49652 / DSM 12025 / NBRC 103806 / TLS) (Chlorobium tepidum).